The chain runs to 203 residues: ATP synthase subunit b (203 aa).

Residues 14–34 (FVWPLLGAGLLLAAEGVAWAS) traverse the membrane as a helical segment.

This sequence belongs to the ATPase B chain family. In terms of assembly, F-type ATPases have 2 components, F(1) - the catalytic core - and F(0) - the membrane proton channel. F(1) has five subunits: alpha(3), beta(3), gamma(1), delta(1), epsilon(1). F(0) has three main subunits: a(1), b(2) and c(10-14). The alpha and beta chains form an alternating ring which encloses part of the gamma chain. F(1) is attached to F(0) by a central stalk formed by the gamma and epsilon chains, while a peripheral stalk is formed by the delta and b chains.

It localises to the cell inner membrane. Functionally, f(1)F(0) ATP synthase produces ATP from ADP in the presence of a proton or sodium gradient. F-type ATPases consist of two structural domains, F(1) containing the extramembraneous catalytic core and F(0) containing the membrane proton channel, linked together by a central stalk and a peripheral stalk. During catalysis, ATP synthesis in the catalytic domain of F(1) is coupled via a rotary mechanism of the central stalk subunits to proton translocation. Its function is as follows. Component of the F(0) channel, it forms part of the peripheral stalk, linking F(1) to F(0). The protein is ATP synthase subunit b of Syntrophobacter fumaroxidans (strain DSM 10017 / MPOB).